Here is a 547-residue protein sequence, read N- to C-terminus: Rho GTPase-activating protein 36 (547 aa).

The first 40 residues, 1 to 40, serve as a signal peptide directing secretion; the sequence is MGGCIPFLKAARALCPRIMPPLLLLSAFIFLVSVLGGAPG. The region spanning 226–426 is the Rho-GAP domain; it reads MSLNPIAKQI…AMIDNWDVLF (201 aa). A disordered region spans residues 485–547; that stretch reads AVLAQSKPSD…AKTGVSYFFP (63 aa). Positions 524 to 539 are enriched in basic and acidic residues; sequence EQDRPLLRVPREKEAK.

As to quaternary structure, may interacts (via the Rho-GAP domain) with the active form of RAC1. As to expression, detected in the outer root sheath of hair follicles at the level of the stem cell bulge, during the anagen and telogen phases of hair growth (at protein level).

Functionally, GTPase activator for the Rho-type GTPases by converting them to an inactive GDP-bound state. In Homo sapiens (Human), this protein is Rho GTPase-activating protein 36 (ARHGAP36).